Reading from the N-terminus, the 161-residue chain is Protein ilm1 (161 aa).

Over 1 to 6 (MLFSFR) the chain is Cytoplasmic. A helical transmembrane segment spans residues 7–27 (AIVLFYCCMLTFAGIGFLWNP). Over 28 to 56 (KFVVESGLVALIGASMEVKPLIVTQDNLS) the chain is Lumenal. Residues 57 to 77 (TLALSGLVFLILGMIYTISLL) form a helical membrane-spanning segment. Residues 78 to 81 (QSNF) are Cytoplasmic-facing. Residues 82-102 (LFFSGITPIRAIFDFILTGFI) form a helical membrane-spanning segment. At 103 to 112 (YLKKEHIASN) the chain is on the lumenal side. The chain crosses the membrane as a helical span at residues 113 to 133 (SLTFTFAFCDLMWQFWMFAAM). At 134-161 (SEERAKYLKNQKKAEELAARKAREVEES) the chain is on the cytoplasmic side.

It belongs to the ILM1 family.

Its subcellular location is the endoplasmic reticulum. It localises to the membrane. This is Protein ilm1 from Schizosaccharomyces pombe (strain 972 / ATCC 24843) (Fission yeast).